Consider the following 309-residue polypeptide: Aspartate carbamoyltransferase catalytic subunit (309 aa).

Carbamoyl phosphate is bound by residues arginine 56 and threonine 57. Residue lysine 84 participates in L-aspartate binding. Arginine 106, histidine 136, and glutamine 139 together coordinate carbamoyl phosphate. L-aspartate contacts are provided by arginine 169 and arginine 221. 2 residues coordinate carbamoyl phosphate: alanine 264 and proline 265.

The protein belongs to the aspartate/ornithine carbamoyltransferase superfamily. ATCase family. In terms of assembly, heterododecamer (2C3:3R2) of six catalytic PyrB chains organized as two trimers (C3), and six regulatory PyrI chains organized as three dimers (R2).

The enzyme catalyses carbamoyl phosphate + L-aspartate = N-carbamoyl-L-aspartate + phosphate + H(+). The protein operates within pyrimidine metabolism; UMP biosynthesis via de novo pathway; (S)-dihydroorotate from bicarbonate: step 2/3. Catalyzes the condensation of carbamoyl phosphate and aspartate to form carbamoyl aspartate and inorganic phosphate, the committed step in the de novo pyrimidine nucleotide biosynthesis pathway. The sequence is that of Aspartate carbamoyltransferase catalytic subunit from Limosilactobacillus reuteri subsp. reuteri (strain JCM 1112) (Lactobacillus reuteri).